Reading from the N-terminus, the 159-residue chain is MKLKIITVGKLKEKYLKEGVAEYQKRLNRFSKIETIELADEKTPDKASISENQRILDIEGERILSKIGERDYVIGLAIEGKQLPSESFSHLIDQKMISGYSTITFVIGGSLGLSQKVKKRADYLMSFGLLTLPHQLMKLVLMEQIYRAFMIRQGTPYHK.

Residues L76, G108, and 127–132 (FGLLTL) contribute to the S-adenosyl-L-methionine site.

Belongs to the RNA methyltransferase RlmH family. In terms of assembly, homodimer.

It localises to the cytoplasm. It catalyses the reaction pseudouridine(1915) in 23S rRNA + S-adenosyl-L-methionine = N(3)-methylpseudouridine(1915) in 23S rRNA + S-adenosyl-L-homocysteine + H(+). Specifically methylates the pseudouridine at position 1915 (m3Psi1915) in 23S rRNA. The chain is Ribosomal RNA large subunit methyltransferase H from Streptococcus agalactiae serotype Ia (strain ATCC 27591 / A909 / CDC SS700).